The chain runs to 445 residues: Dihydroorotate dehydrogenase (quinone), mitochondrial (445 aa).

The transit peptide at 1–16 (MNSGFPRILSKKLFTL) directs the protein to the mitochondrion. A helical transmembrane segment spans residues 39 to 56 (LLKYTVGIAIGSFAGFYF). FMN is bound by residues 124–128 (AGLDK) and Ser148. Residue Lys128 coordinates substrate. 173-177 (NRYGF) contributes to the substrate binding site. FMN is bound by residues Asn221 and Asn251. Substrate is bound at residue 251-256 (NVSSPN). The active-site Nucleophile is the Ser254. FMN contacts are provided by Lys302 and Ser330. 331 to 332 (NT) contacts substrate. Residues Gly356, Gly386, and 407–408 (YT) each bind FMN.

It belongs to the dihydroorotate dehydrogenase family. Type 2 subfamily. The cofactor is FMN.

The protein localises to the mitochondrion inner membrane. The enzyme catalyses (S)-dihydroorotate + a quinone = orotate + a quinol. It functions in the pathway pyrimidine metabolism; UMP biosynthesis via de novo pathway; orotate from (S)-dihydroorotate (quinone route): step 1/1. Its function is as follows. Catalyzes the conversion of dihydroorotate to orotate with quinone as electron acceptor. The sequence is that of Dihydroorotate dehydrogenase (quinone), mitochondrial (URA9) from Kluyveromyces lactis (strain ATCC 8585 / CBS 2359 / DSM 70799 / NBRC 1267 / NRRL Y-1140 / WM37) (Yeast).